Reading from the N-terminus, the 427-residue chain is Extracellular superoxide dismutase [Cu-Zn] 2 (427 aa).

A signal peptide spans 1 to 20; sequence MNKLIISLLIVLSAISIISA. At 21–406 the chain is on the extracellular side; it reads DYQYGYCKFG…PTETSQPGTS (386 aa). N-linked (GlcNAc...) asparagine glycosylation is found at asparagine 38, asparagine 57, asparagine 81, asparagine 190, and asparagine 218. Cu cation contacts are provided by histidine 257, histidine 259, and histidine 275. Zn(2+) is bound by residues histidine 275 and histidine 283. An N-linked (GlcNAc...) asparagine glycan is attached at asparagine 288. Zn(2+) is bound by residues histidine 292 and aspartate 295. Position 331 (histidine 331) interacts with Cu cation. Asparagine 376 carries N-linked (GlcNAc...) asparagine glycosylation. The segment at 381 to 404 is disordered; it reads GESTIEPSPTPSTTPTPTETSQPG. Residues 395-404 show a composition bias toward low complexity; the sequence is PTPTETSQPG. The chain crosses the membrane as a helical span at residues 407 to 426; that stretch reads SYLAPFFVLILSSLISVILI. Leucine 427 is a topological domain (cytoplasmic).

It belongs to the Cu-Zn superoxide dismutase family. The cofactor is Cu cation. Zn(2+) is required as a cofactor.

The protein localises to the cell membrane. The catalysed reaction is 2 superoxide + 2 H(+) = H2O2 + O2. Functionally, protect the extracellular space from toxic effect of reactive oxygen intermediates by converting superoxyde radicals into hydrogen peroxyde and oxygen. This is Extracellular superoxide dismutase [Cu-Zn] 2 (sodB) from Dictyostelium discoideum (Social amoeba).